We begin with the raw amino-acid sequence, 105 residues long: U2-lycotoxin-Ls1b (105 aa).

An N-terminal signal peptide occupies residues 1–17; it reads MIKYVLISALLVVAVYS. Residues 18 to 41 constitute a propeptide that is removed on maturation; it reads FTIEDNEDALLEEAEDELDTEEER. Disulfide bonds link Cys51–Cys67, Cys58–Cys97, Cys60–Cys83, and Cys69–Cys81.

It belongs to the neurotoxin 04 (omega-agtx) family. 01 (type I omega-agtx) subfamily. As to expression, expressed by the venom gland.

The protein localises to the secreted. In terms of biological role, insecticidal to house crickets. It induces an excitatory slow-onset impact that leads to irreversible spastic paralysis. It also modifies human voltage-gated potassium channel Kv1.5/KCNA5. Most likely, it binds to the voltage-sensing domain of the channel, suggesting it does not block the pore but prevents its opening at physiological membrane potentials. The recombinant peptide binds to the channel in an irreversible manner and slows down the hKv1.5 current activation kinetics. It is not toxic to mice, when intracranially injected (at 0.5 ug/g mouse). The sequence is that of U2-lycotoxin-Ls1b from Lycosa singoriensis (Wolf spider).